Reading from the N-terminus, the 850-residue chain is Trimethylguanosine synthase (850 aa).

The interval 54 to 85 (NNAGDRVTEEEEDDHSSGTTESHSADEGDLDP) is disordered. Phosphothreonine is present on Thr-61. 2 positions are modified to phosphoserine: Ser-92 and Ser-152. Disordered stretches follow at residues 278–311 (DQNA…DNDH), 327–454 (EVEQ…GGIP), and 523–566 (ISQE…PENC). The span at 363 to 374 (TPKESDISENRS) shows a compositional bias: basic and acidic residues. The span at 375-390 (SDQPAQELQESSGTNT) shows a compositional bias: polar residues. Residues Ser-405 and Ser-431 each carry the phosphoserine modification. Over residues 424-435 (DIDENPDSEVDD) the composition is skewed to acidic residues. Residues 548–562 (SMEKTDGLMETRDPE) are compositionally biased toward basic and acidic residues. Residue Ser-571 is modified to Phosphoserine. Positions 595–628 (TEGVANSPRAEAEVEIKKKKKKKKKNKNKKINGL) are disordered. Over residues 611–624 (KKKKKKKKKNKNKK) the composition is skewed to basic residues. Asp-713 is a binding site for S-adenosyl-L-methionine.

It belongs to the methyltransferase superfamily. Trimethylguanosine synthase family. In terms of assembly, may form homooligomers. Interacts with CREBBP/CBP, EED/WAIT1, EP300/P300, NCOA6/PRIP, PPARBP/PBP and SMN. In terms of tissue distribution, a 55 kDa isoform is widely expressed while a 90 kDa isoform is detected exclusively in brain and testis (at protein level).

It localises to the cytoplasm. It is found in the nucleus. The protein localises to the cajal body. Its subcellular location is the nucleolus. It catalyses the reaction a 5'-end (N(7)-methyl 5'-triphosphoguanosine)-ribonucleoside in snRNA + S-adenosyl-L-methionine = a 5'-end (N(2),N(7)-dimethyl 5'-triphosphoguanosine)-ribonucleoside in snRNA + S-adenosyl-L-homocysteine + H(+). It carries out the reaction a 5'-end (N(7)-methyl 5'-triphosphoguanosine)-ribonucleoside in snoRNA + S-adenosyl-L-methionine = a 5'-end (N(2),N(7)-dimethyl 5'-triphosphoguanosine)-ribonucleoside in snoRNA + S-adenosyl-L-homocysteine + H(+). The enzyme catalyses a 5'-end (N(2),N(7)-dimethyl 5'-triphosphoguanosine)-ribonucleoside in snRNA + S-adenosyl-L-methionine = a 5'-end (N(2),N(2),N(7)-trimethyl 5'-triphosphoguanosine)-ribonucleoside in snRNA + S-adenosyl-L-homocysteine + H(+). The catalysed reaction is a 5'-end (N(2),N(7)-dimethyl 5'-triphosphoguanosine)-ribonucleoside in snoRNA + S-adenosyl-L-methionine = a 5'-end (N(2),N(2),N(7)-trimethyl 5'-triphosphoguanosine)-ribonucleoside in snoRNA + S-adenosyl-L-homocysteine + H(+). Its function is as follows. Catalyzes the 2 serial methylation steps for the conversion of the 7-monomethylguanosine (m(7)G) caps of snRNAs and snoRNAs to a 2,2,7-trimethylguanosine (m(2,2,7)G) cap structure. The enzyme is specific for guanine, and N7 methylation must precede N2 methylation. Hypermethylation of the m7G cap of U snRNAs leads to their concentration in nuclear foci, their colocalization with coilin and the formation of canonical Cajal bodies (CBs). Plays a role in transcriptional regulation. The sequence is that of Trimethylguanosine synthase from Rattus norvegicus (Rat).